A 20-amino-acid chain; its full sequence is FLGKKVLKAVGKQAAKKQME.

Glu20 is subject to Glutamic acid 1-amide.

Expressed by the venom gland.

The protein resides in the secreted. This is Short cationic peptide-3a from Cupiennius salei (American wandering spider).